Consider the following 39-residue polypeptide: Phosphatase RapI inhibitor (39 aa).

Residues 1–34 (MKISRILLAAVILSSVFSITYLQSDHNTEIKVAA) constitute a propeptide that is removed on maturation.

This sequence belongs to the Phr family. In terms of processing, contains a predicted signal peptide cleavage site in the N-terminal region, however the propeptide is probably subject to only one processing event, at the N-terminal end of the mature peptide.

Its subcellular location is the secreted. It localises to the cytoplasm. In terms of biological role, intercellular signaling molecule that inhibits excision of the mobile genetic element ICEBs1 when cells are crowded by cells that contain ICEBs1 and produce the PhrI peptide. Secreted during production, but the mature peptide acts intracellularly, indicating that it needs to be imported into the cell to function. Acts by inhibiting RapI activity. This Bacillus subtilis (strain 168) protein is Phosphatase RapI inhibitor (phrI).